A 133-amino-acid chain; its full sequence is Putative esterase TV1331 (133 aa).

Belongs to the thioesterase PaaI family.

The sequence is that of Putative esterase TV1331 from Thermoplasma volcanium (strain ATCC 51530 / DSM 4299 / JCM 9571 / NBRC 15438 / GSS1).